The following is a 257-amino-acid chain: Spermidine/putrescine transport system permease protein PotC (257 aa).

At 1–7 (MSRFFLR) the chain is on the cytoplasmic side. The helical transmembrane segment at 8–27 (NAFMFVVYAYLYIPIIILVT) threads the bilayer. At 28 to 65 (NSFNKDRYGLSWKGFSWNWYERLFNNDTLIQAAIHSVT) the chain is on the periplasmic side. Positions 60-248 (AIHSVTIAFF…VLSLALVVLS (189 aa)) constitute an ABC transmembrane type-1 domain. Residues 66 to 85 (IAFFAATLATIVGGLTAIAL) form a helical membrane-spanning segment. The Cytoplasmic segment spans residues 86 to 100 (YRYRFRGKQAVSGML). A helical membrane pass occupies residues 101–120 (FIVMMSPDIVMAVSLLALFM). The Periplasmic portion of the chain corresponds to 121-128 (VVGISLGF). The chain crosses the membrane as a helical span at residues 129–148 (WSLLLAHVTFCLPYVTVTIF). Over 149–176 (SRLNGFDSRMLEAAKDLGASEVTILRKI) the chain is Cytoplasmic. A helical membrane pass occupies residues 177 to 196 (ILPLALPAVVSGWLLSFTIS). The Periplasmic segment spans residues 197–231 (LDDVVVSSFVSGVSYEILPLRIFSLVKTGVTPEVN). The chain crosses the membrane as a helical span at residues 232-251 (ALATIMIVLSLALVVLSQLI). Topologically, residues 252–257 (TRKNNH) are cytoplasmic.

The protein belongs to the binding-protein-dependent transport system permease family. CysTW subfamily.

It localises to the cell inner membrane. In terms of biological role, required for the activity of the bacterial periplasmic transport system of putrescine and spermidine. In Haemophilus influenzae (strain ATCC 51907 / DSM 11121 / KW20 / Rd), this protein is Spermidine/putrescine transport system permease protein PotC (potC).